Reading from the N-terminus, the 319-residue chain is Coproporphyrin III ferrochelatase (319 aa).

2 residues coordinate Fe(2+): His-193 and Glu-274.

This sequence belongs to the ferrochelatase family.

The protein resides in the cytoplasm. It carries out the reaction Fe-coproporphyrin III + 2 H(+) = coproporphyrin III + Fe(2+). Its pathway is porphyrin-containing compound metabolism; protoheme biosynthesis. Involved in coproporphyrin-dependent heme b biosynthesis. Catalyzes the insertion of ferrous iron into coproporphyrin III to form Fe-coproporphyrin III. The chain is Coproporphyrin III ferrochelatase from Streptococcus mutans serotype c (strain ATCC 700610 / UA159).